Reading from the N-terminus, the 322-residue chain is DNA primase small subunit PriS (322 aa).

Residues aspartate 100, aspartate 102, and aspartate 228 contribute to the active site.

This sequence belongs to the eukaryotic-type primase small subunit family. In terms of assembly, heterodimer of a small subunit (PriS) and a large subunit (PriL). Mg(2+) is required as a cofactor. The cofactor is Mn(2+).

Catalytic subunit of DNA primase, an RNA polymerase that catalyzes the synthesis of short RNA molecules used as primers for DNA polymerase during DNA replication. The small subunit contains the primase catalytic core and has DNA synthesis activity on its own. Binding to the large subunit stabilizes and modulates the activity, increasing the rate of DNA synthesis while decreasing the length of the DNA fragments, and conferring RNA synthesis capability. The DNA polymerase activity may enable DNA primase to also catalyze primer extension after primer synthesis. May also play a role in DNA repair. The protein is DNA primase small subunit PriS of Sulfolobus acidocaldarius (strain ATCC 33909 / DSM 639 / JCM 8929 / NBRC 15157 / NCIMB 11770).